A 621-amino-acid chain; its full sequence is Autonomous transposable element EN-1 mosaic protein (621 aa).

Disordered regions lie at residues M1 to R119, Y428 to R447, Q498 to Q530, and R549 to E621. Polar residues-rich tracts occupy residues E27–L39 and R47–R61. A compositionally biased stretch (acidic residues) spans A82–S102. Over residues P570–A594 the composition is skewed to low complexity.

Functionally, this protein has most probably three functions; the mutator (M) function, for excision and transposition; the suppressor (S) function, which inhibits residual gene activity of certain alleles in which inhibitor elements are integrated; an activator (A) function is proposed, because inactive SPM can be activated by a second SPM. This Zea mays (Maize) protein is Autonomous transposable element EN-1 mosaic protein.